The sequence spans 201 residues: LexA repressor (201 aa).

Residues arginine 27–lysine 47 constitute a DNA-binding region (H-T-H motif). Residues serine 116 and lysine 153 each act as for autocatalytic cleavage activity in the active site.

Belongs to the peptidase S24 family. In terms of assembly, homodimer.

It carries out the reaction Hydrolysis of Ala-|-Gly bond in repressor LexA.. Functionally, represses a number of genes involved in the response to DNA damage (SOS response), including recA and lexA. In the presence of single-stranded DNA, RecA interacts with LexA causing an autocatalytic cleavage which disrupts the DNA-binding part of LexA, leading to derepression of the SOS regulon and eventually DNA repair. The chain is LexA repressor from Dechloromonas aromatica (strain RCB).